The sequence spans 148 residues: FAD synthase (148 aa).

ATP is bound by residues 11–12, 16–19, asparagine 94, and tyrosine 121; these read TF and HPGH.

This sequence belongs to the archaeal FAD synthase family. In terms of assembly, homodimer. A divalent metal cation serves as cofactor.

It catalyses the reaction FMN + ATP + H(+) = FAD + diphosphate. The protein operates within cofactor biosynthesis; FAD biosynthesis; FAD from FMN: step 1/1. In terms of biological role, catalyzes the transfer of the AMP portion of ATP to flavin mononucleotide (FMN) to produce flavin adenine dinucleotide (FAD) coenzyme. This is FAD synthase from Methanoregula boonei (strain DSM 21154 / JCM 14090 / 6A8).